The chain runs to 55 residues: Protein CADMIUM TOLERANCE 1 (55 aa).

A helical transmembrane segment spans residues G24–Y40.

It belongs to the CYSTM1 family.

Its subcellular location is the cell membrane. The protein localises to the secreted. The protein resides in the cell wall. Its function is as follows. Confers resistance to heavy metal ions (e.g. cadmium (CdCl(2)) and copper (CuCl(2))) by chelating them at the plasma membrane of root cells, thus stopping their entry and reducing their accumulation. Binds to aluminium (Al). This is Protein CADMIUM TOLERANCE 1 from Oryza sativa subsp. indica (Rice).